The primary structure comprises 274 residues: Glutamate--cysteine ligase regulatory subunit (274 aa).

S59 is modified (phosphoserine). K263 bears the N6-acetyllysine mark.

This sequence belongs to the aldo/keto reductase family. Glutamate--cysteine ligase light chain subfamily. As to quaternary structure, heterodimer of a catalytic heavy chain and a regulatory light chain.

Its pathway is sulfur metabolism; glutathione biosynthesis; glutathione from L-cysteine and L-glutamate: step 1/2. In Mus musculus (Mouse), this protein is Glutamate--cysteine ligase regulatory subunit (Gclm).